The chain runs to 295 residues: Trimeric intracellular cation channel type A (295 aa).

At 1–18 the chain is on the lumenal side; it reads MELLSALSLDDLAASFSK. The helical transmembrane segment at 19 to 39 threads the bilayer; the sequence is LPVFPLFDVAYYIISILYLKY. Residues 40–51 lie on the Cytoplasmic side of the membrane; sequence EPGAVDLSKRSP. A helical membrane pass occupies residues 52-72; it reads VASWLCAMLYCFGSYILADVL. The Lumenal segment spans residues 73 to 84; the sequence is LGESPIHYFSNN. Gly74 lines the Ca(2+) pocket. A helical membrane pass occupies residues 85–105; that stretch reads ANILLASAVWYLTFFCPLNIF. Residues 106 to 144 lie on the Cytoplasmic side of the membrane; sequence YKIVSFLPVKLVLVGMKEVVRVRKIAMGIHHAHHHYHHG. Lys122 and Arg126 together coordinate a 1,2-diacyl-sn-glycero-3-phospho-(1D-myo-inositol-4,5-bisphosphate). The helical transmembrane segment at 145-165 threads the bilayer; it reads WVIMVLIGWVKGSGVALMSNL. The Lumenal portion of the chain corresponds to 166–178; the sequence is EQLLRGVWKPETN. Residues 179 to 199 traverse the membrane as a helical segment; it reads EILHMSFPTKASLYGAILFTL. Residues 200-201 are Cytoplasmic-facing; the sequence is QQ. The chain crosses the membrane as a helical span at residues 202 to 222; sequence AHWLPISKAYLIFFFTLFMAV. Over 223–233 the chain is Lumenal; it reads CKIYMTATHSH. A helical transmembrane segment spans residues 234–254; the sequence is GSPFAIFESGICYVLFAAANG. The Cytoplasmic portion of the chain corresponds to 255–295; sequence DHDDHGNHHHHHDDHDVSHSAGKSKEEHNEGTRKRKTKKAE. The tract at residues 258 to 295 is disordered; that stretch reads DHGNHHHHHDDHDVSHSAGKSKEEHNEGTRKRKTKKAE. The span at 267–286 shows a compositional bias: basic and acidic residues; sequence DDHDVSHSAGKSKEEHNEGT.

It belongs to the TMEM38 family. As to quaternary structure, homotrimer; conformation seems to be controled by binding to diacylglycerol (DAG).

It localises to the sarcoplasmic reticulum membrane. It is found in the nucleus membrane. The enzyme catalyses K(+)(in) = K(+)(out). Its activity is regulated as follows. Channel activity is activated by a change of voltage within the sarcoplasmic reticulum lumen and blocked by luminal high Ca(2+) levels. Functionally, intracellular monovalent cation channel required for maintenance of rapid intracellular calcium release. Acts as a potassium counter-ion channel that functions in synchronization with calcium release from intracellular stores. Opened by a change of voltage within the sarcoplasmic reticulum lumen. In Xenopus laevis (African clawed frog), this protein is Trimeric intracellular cation channel type A (tmem38a).